A 170-amino-acid polypeptide reads, in one-letter code: Urease accessory protein UreE (170 aa).

This sequence belongs to the UreE family.

The protein resides in the cytoplasm. In terms of biological role, involved in urease metallocenter assembly. Binds nickel. Probably functions as a nickel donor during metallocenter assembly. This chain is Urease accessory protein UreE, found in Helicobacter pylori (strain J99 / ATCC 700824) (Campylobacter pylori J99).